The sequence spans 497 residues: ATP synthase subunit alpha, chloroplastic (497 aa).

Residue 170 to 177 (GDRQTGKT) participates in ATP binding.

This sequence belongs to the ATPase alpha/beta chains family. In terms of assembly, F-type ATPases have 2 components, CF(1) - the catalytic core - and CF(0) - the membrane proton channel. CF(1) has five subunits: alpha(3), beta(3), gamma(1), delta(1), epsilon(1). CF(0) has four main subunits: a, b, b' and c.

The protein localises to the plastid. Its subcellular location is the chloroplast thylakoid membrane. The enzyme catalyses ATP + H2O + 4 H(+)(in) = ADP + phosphate + 5 H(+)(out). Produces ATP from ADP in the presence of a proton gradient across the membrane. The alpha chain is a regulatory subunit. The protein is ATP synthase subunit alpha, chloroplastic of Bigelowiella natans (Pedinomonas minutissima).